The primary structure comprises 88 residues: Co-chaperonin GroES (88 aa).

Belongs to the GroES chaperonin family. Heptamer of 7 subunits arranged in a ring. Interacts with the chaperonin GroEL.

It is found in the cytoplasm. Its function is as follows. Together with the chaperonin GroEL, plays an essential role in assisting protein folding. The GroEL-GroES system forms a nano-cage that allows encapsulation of the non-native substrate proteins and provides a physical environment optimized to promote and accelerate protein folding. GroES binds to the apical surface of the GroEL ring, thereby capping the opening of the GroEL channel. This chain is Co-chaperonin GroES, found in Treponema denticola (strain ATCC 35405 / DSM 14222 / CIP 103919 / JCM 8153 / KCTC 15104).